We begin with the raw amino-acid sequence, 464 residues long: Phospho-cellobiase (464 aa).

Glutamate 172 (proton donor) is an active-site residue. Glutamate 361 functions as the Nucleophile in the catalytic mechanism.

It belongs to the glycosyl hydrolase 1 family.

In Klebsiella oxytoca, this protein is Phospho-cellobiase (casB).